We begin with the raw amino-acid sequence, 482 residues long: Adenylyltransferase and sulfurtransferase uba4 (482 aa).

Residues 33–57 (EGAALRAQSQKTASANATTGQRTKS) are disordered. Over residues 39-54 (AQSQKTASANATTGQR) the composition is skewed to polar residues. ATP is bound by residues G98, D119, 126–130 (SNLHR), K143, and 187–188 (DN). Residues C236 and C239 each contribute to the Zn(2+) site. The active-site Glycyl thioester intermediate; for adenylyltransferase activity is the C253. Positions 315 and 318 each coordinate Zn(2+). The Rhodanese domain occupies 366–480 (AGAQRHIIDV…WREQVDPDWP (115 aa)). The active-site Cysteine persulfide intermediate; for sulfurtransferase activity is the C435.

This sequence in the N-terminal section; belongs to the HesA/MoeB/ThiF family. UBA4 subfamily. The cofactor is Zn(2+).

Its subcellular location is the cytoplasm. It localises to the cytosol. It carries out the reaction [molybdopterin-synthase sulfur-carrier protein]-C-terminal Gly-Gly + ATP + H(+) = [molybdopterin-synthase sulfur-carrier protein]-C-terminal Gly-Gly-AMP + diphosphate. The catalysed reaction is [molybdopterin-synthase sulfur-carrier protein]-C-terminal Gly-Gly-AMP + S-sulfanyl-L-cysteinyl-[cysteine desulfurase] + AH2 = [molybdopterin-synthase sulfur-carrier protein]-C-terminal-Gly-aminoethanethioate + L-cysteinyl-[cysteine desulfurase] + A + AMP + 2 H(+). It participates in tRNA modification; 5-methoxycarbonylmethyl-2-thiouridine-tRNA biosynthesis. It functions in the pathway cofactor biosynthesis; molybdopterin biosynthesis. Functionally, plays a central role in 2-thiolation of mcm(5)S(2)U at tRNA wobble positions of cytosolic tRNA(Lys), tRNA(Glu) and tRNA(Gln). Also essential during biosynthesis of the molybdenum cofactor. Acts by mediating the C-terminal thiocarboxylation of sulfur carriers urm1 and mocs2a. Its N-terminus first activates urm1 and mocs2a as acyl-adenylates (-COAMP), then the persulfide sulfur on the catalytic cysteine is transferred to urm1 and mocs2a to form thiocarboxylation (-COSH) of their C-terminus. The reaction probably involves hydrogen sulfide that is generated from the persulfide intermediate and that acts as a nucleophile towards urm1 and mocs2a. Subsequently, a transient disulfide bond is formed. Does not use thiosulfate as sulfur donor; nfs1 probably acting as a sulfur donor for thiocarboxylation reactions. The chain is Adenylyltransferase and sulfurtransferase uba4 from Emericella nidulans (strain FGSC A4 / ATCC 38163 / CBS 112.46 / NRRL 194 / M139) (Aspergillus nidulans).